The following is a 314-amino-acid chain: Ribosomal RNA small subunit methyltransferase H (314 aa).

S-adenosyl-L-methionine contacts are provided by residues 35-37 (GGH), Asp54, Phe83, Asp104, and Gln111.

It belongs to the methyltransferase superfamily. RsmH family.

It localises to the cytoplasm. The catalysed reaction is cytidine(1402) in 16S rRNA + S-adenosyl-L-methionine = N(4)-methylcytidine(1402) in 16S rRNA + S-adenosyl-L-homocysteine + H(+). Its function is as follows. Specifically methylates the N4 position of cytidine in position 1402 (C1402) of 16S rRNA. This Oenococcus oeni (strain ATCC BAA-331 / PSU-1) protein is Ribosomal RNA small subunit methyltransferase H.